The chain runs to 239 residues: Ribosomal RNA small subunit methyltransferase G (239 aa).

S-adenosyl-L-methionine contacts are provided by residues glycine 77, phenylalanine 82, 128-129 (AE), and arginine 146. The interval 215-239 (DKRSQTPKKYPRKPGTPNKSPLLEK) is disordered.

The protein belongs to the methyltransferase superfamily. RNA methyltransferase RsmG family.

The protein resides in the cytoplasm. In terms of biological role, specifically methylates the N7 position of guanine in position 535 of 16S rRNA. This chain is Ribosomal RNA small subunit methyltransferase G, found in Staphylococcus saprophyticus subsp. saprophyticus (strain ATCC 15305 / DSM 20229 / NCIMB 8711 / NCTC 7292 / S-41).